Here is a 291-residue protein sequence, read N- to C-terminus: uncharacterized protein (291 aa).

This is an uncharacterized protein from Lymantria dispar multicapsid nuclear polyhedrosis virus (LdMNPV).